The primary structure comprises 441 residues: Aminopeptidase C (441 aa).

Catalysis depends on residues Cys70, His361, and Asn382.

This sequence belongs to the peptidase C1 family.

It carries out the reaction Inactivates bleomycin B2 (a cytotoxic glycometallopeptide) by hydrolysis of a carboxyamide bond of beta-aminoalanine, but also shows general aminopeptidase activity. The specificity varies somewhat with source, but amino acid arylamides of Met, Leu and Ala are preferred.. The protein is Aminopeptidase C (pepC) of Listeria monocytogenes serovar 1/2a (strain ATCC BAA-679 / EGD-e).